Reading from the N-terminus, the 338-residue chain is Ketol-acid reductoisomerase (NADP(+)) (338 aa).

Residues 1–181 (MNVFYDKDAD…GGGRAGIIET (181 aa)) form the KARI N-terminal Rossmann domain. NADP(+) contacts are provided by residues 24 to 27 (YGSQ), arginine 47, and serine 52. Histidine 107 is an active-site residue. Glycine 133 contributes to the NADP(+) binding site. The region spanning 182-327 (NFREETETDL…AKLRAMMPWI (146 aa)) is the KARI C-terminal knotted domain. Residues aspartate 190, glutamate 194, glutamate 226, and glutamate 230 each contribute to the Mg(2+) site. Residue serine 251 coordinates substrate.

This sequence belongs to the ketol-acid reductoisomerase family. Mg(2+) serves as cofactor.

The enzyme catalyses (2R)-2,3-dihydroxy-3-methylbutanoate + NADP(+) = (2S)-2-acetolactate + NADPH + H(+). It carries out the reaction (2R,3R)-2,3-dihydroxy-3-methylpentanoate + NADP(+) = (S)-2-ethyl-2-hydroxy-3-oxobutanoate + NADPH + H(+). Its pathway is amino-acid biosynthesis; L-isoleucine biosynthesis; L-isoleucine from 2-oxobutanoate: step 2/4. It functions in the pathway amino-acid biosynthesis; L-valine biosynthesis; L-valine from pyruvate: step 2/4. In terms of biological role, involved in the biosynthesis of branched-chain amino acids (BCAA). Catalyzes an alkyl-migration followed by a ketol-acid reduction of (S)-2-acetolactate (S2AL) to yield (R)-2,3-dihydroxy-isovalerate. In the isomerase reaction, S2AL is rearranged via a Mg-dependent methyl migration to produce 3-hydroxy-3-methyl-2-ketobutyrate (HMKB). In the reductase reaction, this 2-ketoacid undergoes a metal-dependent reduction by NADPH to yield (R)-2,3-dihydroxy-isovalerate. This Burkholderia cenocepacia (strain ATCC BAA-245 / DSM 16553 / LMG 16656 / NCTC 13227 / J2315 / CF5610) (Burkholderia cepacia (strain J2315)) protein is Ketol-acid reductoisomerase (NADP(+)).